The sequence spans 429 residues: UDP-N-acetylglucosamine 1-carboxyvinyltransferase (429 aa).

22-23 (KN) contributes to the phosphoenolpyruvate binding site. UDP-N-acetyl-alpha-D-glucosamine is bound at residue R102. C126 acts as the Proton donor in catalysis. C126 bears the 2-(S-cysteinyl)pyruvic acid O-phosphothioketal mark. UDP-N-acetyl-alpha-D-glucosamine is bound by residues 131-135 (RPVDL), D316, and I338.

It belongs to the EPSP synthase family. MurA subfamily.

The protein resides in the cytoplasm. It carries out the reaction phosphoenolpyruvate + UDP-N-acetyl-alpha-D-glucosamine = UDP-N-acetyl-3-O-(1-carboxyvinyl)-alpha-D-glucosamine + phosphate. The protein operates within cell wall biogenesis; peptidoglycan biosynthesis. Cell wall formation. Adds enolpyruvyl to UDP-N-acetylglucosamine. The chain is UDP-N-acetylglucosamine 1-carboxyvinyltransferase from Methylorubrum populi (strain ATCC BAA-705 / NCIMB 13946 / BJ001) (Methylobacterium populi).